The following is a 71-amino-acid chain: MAFYRRRISPIPPGQPIDYKDVDLLRRFITERGKILPRRVTGLTAKQQRQLAVAIKRARIMALLPFLNLEG.

This sequence belongs to the bacterial ribosomal protein bS18 family. Part of the 30S ribosomal subunit. Forms a tight heterodimer with protein bS6.

Binds as a heterodimer with protein bS6 to the central domain of the 16S rRNA, where it helps stabilize the platform of the 30S subunit. The chain is Small ribosomal subunit protein bS18 from Thermosynechococcus vestitus (strain NIES-2133 / IAM M-273 / BP-1).